The following is a 447-amino-acid chain: Delta(5) fatty acid desaturase fat-4 (447 aa).

Positions 1–80 constitute a Cytochrome b5 heme-binding domain; that stretch reads MVLREQEHEP…TQEPEIPDIK (80 aa). 4 helical membrane passes run 137-157, 257-277, 292-312, and 319-339; these read IFTILFAFYLQYHTYYLPSAI, WTFMLPFLRLSWLLQSIIFVS, IYEQVGLSLHWAWSLGQLYFL, and IMFFLVSHLVGGFLLSHVVTF.

The protein belongs to the fatty acid desaturase type 1 family.

It localises to the membrane. The catalysed reaction is (11Z,14Z)-eicosadienoyl-CoA + 2 Fe(II)-[cytochrome b5] + O2 + 2 H(+) = (5Z,11Z,14Z)-eicosatrienoyl-CoA + 2 Fe(III)-[cytochrome b5] + 2 H2O. It catalyses the reaction (11Z,14Z,17Z)-eicosatrienoyl-CoA + 2 Fe(II)-[cytochrome b5] + O2 + 2 H(+) = (5Z,11Z,14Z,17Z)-eicosatetraenoyl-CoA + 2 Fe(III)-[cytochrome b5] + 2 H2O. The enzyme catalyses (8Z,11Z,14Z,17Z)-eicosatetraenoyl-CoA + 2 Fe(II)-[cytochrome b5] + O2 + 2 H(+) = (5Z,8Z,11Z,14Z,17Z)-eicosapentaenoyl-CoA + 2 Fe(III)-[cytochrome b5] + 2 H2O. It carries out the reaction (8Z,11Z,14Z)-eicosatrienoyl-CoA + 2 Fe(II)-[cytochrome b5] + O2 + 2 H(+) = (5Z,8Z,11Z,14Z)-eicosatetraenoyl-CoA + 2 Fe(III)-[cytochrome b5] + 2 H2O. Its pathway is lipid metabolism; polyunsaturated fatty acid biosynthesis. Can function as a Delta(5) fatty acid desaturase and behaves as a (8-3) desaturase. Introduces a double bond in the fatty acid chain 5 carbons away from carboxy terminal to biosynthesize polyunsaturated fatty acids (PUFAs) endogenously (PUFAs are essential for membrane structure and many cellular and physiological processes). Acts on a variety of substrates such as dihomo-gamma-linoleoyl-CoA ((8Z,11Z,14Z)-eicosatrienoyl-CoA, 20:3n-6) to generate arachidonoyl-CoA ((5Z,8Z,11Z,14Z)-eicosatetraenoyl-CoA, 20:4n-6). Also acts on a number of other substrates, including fatty acids that do not contain a double bond at the 8 position like (11Z,14Z,17Z)-eicosatrienoyl-CoA (20:3n-3) to produce (5Z,11Z,14Z,17Z)-eicosatetraenoyl-CoA (20:4n-3). Unlike plants, Caenorhabditis elegans desaturases seem to use fatty acyl-CoAs as substrates. This chain is Delta(5) fatty acid desaturase fat-4 (fat-4), found in Caenorhabditis elegans.